An 854-amino-acid polypeptide reads, in one-letter code: DNA mismatch repair protein MutS (854 aa).

Residues 1-21 are disordered; the sequence is MTASDIQPTEPHTPPTPHADT. Position 658 to 665 (658 to 665) interacts with ATP; the sequence is GPNASGKS.

It belongs to the DNA mismatch repair MutS family.

This protein is involved in the repair of mismatches in DNA. It is possible that it carries out the mismatch recognition step. This protein has a weak ATPase activity. In Trichormus variabilis (strain ATCC 29413 / PCC 7937) (Anabaena variabilis), this protein is DNA mismatch repair protein MutS.